Reading from the N-terminus, the 245-residue chain is Ribonuclease 3 (245 aa).

The RNase III domain occupies 24–146; the sequence is YAVFLQKLGY…IIGAIYLESG (123 aa). Glutamate 59 is a Mg(2+) binding site. Aspartate 63 is an active-site residue. Residues asparagine 132 and glutamate 135 each contribute to the Mg(2+) site. Glutamate 135 is an active-site residue. The region spanning 173–243 is the DRBM domain; sequence DSKTLLQEYL…ARQAYELAIV (71 aa).

It belongs to the ribonuclease III family. Homodimer. It depends on Mg(2+) as a cofactor.

The protein resides in the cytoplasm. The catalysed reaction is Endonucleolytic cleavage to 5'-phosphomonoester.. Functionally, digests double-stranded RNA. Involved in the processing of primary rRNA transcript to yield the immediate precursors to the large and small rRNAs (23S and 16S). Processes some mRNAs, and tRNAs when they are encoded in the rRNA operon. Processes pre-crRNA and tracrRNA of type II CRISPR loci if present in the organism. The chain is Ribonuclease 3 from Nitrosomonas europaea (strain ATCC 19718 / CIP 103999 / KCTC 2705 / NBRC 14298).